Reading from the N-terminus, the 238-residue chain is Large ribosomal subunit protein uL2 (238 aa).

Positions 203–223 (GGGAWKHPGKPTTVSRNAPPG) are disordered.

Belongs to the universal ribosomal protein uL2 family. Part of the 50S ribosomal subunit. Forms a bridge to the 30S subunit in the 70S ribosome.

One of the primary rRNA binding proteins. Required for association of the 30S and 50S subunits to form the 70S ribosome, for tRNA binding and peptide bond formation. It has been suggested to have peptidyltransferase activity; this is somewhat controversial. Makes several contacts with the 16S rRNA in the 70S ribosome. This Methanosarcina barkeri (strain Fusaro / DSM 804) protein is Large ribosomal subunit protein uL2.